Reading from the N-terminus, the 524-residue chain is Vang-like protein 1 (524 aa).

The segment covering Met1–Ser15 has biased composition (low complexity). Residues Met1–His85 form a disordered region. The Cytoplasmic portion of the chain corresponds to Met1 to Ser117. The segment covering Gly73 to His85 has biased composition (polar residues). Phosphoserine is present on residues Ser86 and Ser88. Residues Phe118–Trp138 form a helical membrane-spanning segment. Topologically, residues Arg139–Gly151 are extracellular. The chain crosses the membrane as a helical span at residues Leu152–Phe172. The Cytoplasmic segment spans residues Arg173 to Val182. Residues Phe183 to Phe203 traverse the membrane as a helical segment. The Extracellular segment spans residues Tyr204–Tyr222. The helical transmembrane segment at Ala223 to Leu243 threads the bilayer. The Cytoplasmic segment spans residues Arg244–Val524.

The protein belongs to the Vang family. Heterodimer with VANGL2. Interacts through its C-terminal region with the N-terminal half of DVL1, DVL2 and DVL3. The PDZ domain of DVL1, DVL2 and DVL3 is required for the interaction. As to expression, according to PubMed:11956595, ubiquitously expressed. According to PubMed:12011995, expressed specifically in testis and ovary.

It is found in the cell membrane. The sequence is that of Vang-like protein 1 (VANGL1) from Homo sapiens (Human).